The following is an 89-amino-acid chain: Elongation factor 1-beta (89 aa).

The protein belongs to the EF-1-beta/EF-1-delta family.

In terms of biological role, promotes the exchange of GDP for GTP in EF-1-alpha/GDP, thus allowing the regeneration of EF-1-alpha/GTP that could then be used to form the ternary complex EF-1-alpha/GTP/AAtRNA. This chain is Elongation factor 1-beta, found in Methanosarcina mazei (strain ATCC BAA-159 / DSM 3647 / Goe1 / Go1 / JCM 11833 / OCM 88) (Methanosarcina frisia).